A 518-amino-acid chain; its full sequence is Receptor-interacting serine/threonine-protein kinase 3 (518 aa).

Ser2 bears the Phosphoserine mark. The 267-residue stretch at 21 to 287 (LENQELVGKG…ECLPKTDEVF (267 aa)) folds into the Protein kinase domain. 27 to 35 (VGKGGFGTV) is an ATP binding site. Lys42 participates in a covalent cross-link: Glycyl lysine isopeptide (Lys-Gly) (interchain with G-Cter in ubiquitin). Residue Lys50 coordinates ATP. The active-site Proton acceptor is Asp142. Ser164 is modified (phosphoserine). Position 182 is a phosphothreonine (Thr182). Residues Ser199 and Ser227 each carry the phosphoserine; by autocatalysis modification. A Phosphothreonine modification is found at Thr252. A Phosphoserine modification is found at Ser299. The residue at position 333 (Thr333) is a Phosphothreonine. Glycyl lysine isopeptide (Lys-Gly) (interchain with G-Cter in ubiquitin) cross-links involve residues Lys351 and Lys363. Residues 355–443 (EEPPSSVPKK…WSCRTPEPNP (89 aa)) are disordered. A compositionally biased stretch (polar residues) spans 384–408 (TAGTSSDSMAQPPQTPETSTFRNQM). Ser389 carries the post-translational modification Phosphoserine. The residue at position 401 (Thr401) is a Phosphothreonine. Residues 450–466 (VNIYNCSGVQVGDNNYL) carry the RIP homotypic interaction motif (RHIM) motif. Residues 476 to 518 (TWGLAPSGKGRGLQHPPPVGSQEGPKDPEAWSRPQGWYNHSGK) form a disordered region. Lys518 participates in a covalent cross-link: Glycyl lysine isopeptide (Lys-Gly) (interchain with G-Cter in ubiquitin).

Belongs to the protein kinase superfamily. TKL Ser/Thr protein kinase family. In terms of assembly, interacts (via RIP homotypic interaction motif) with RIPK1 (via RIP homotypic interaction motif); this interaction induces RIPK1 phosphorylation and formation of a RIPK1-RIPK3 necrosis-inducing complex. Interacts with MLKL; the interaction is direct and triggers necroptosis. Interacts with ZBP1 (via RIP homotypic interaction motif); interaction with ZBP1 activates RIPK3, triggering necroptosis. Upon TNF-induced necrosis, the RIPK1-RIPK3 dimer further interacts with PGAM5 and MLKL; the formation of this complex leads to PGAM5 phosphorylation and increase in PGAM5 phosphatase activity. Binds TRAF2 and is recruited to the TNFR-1 signaling complex. Interacts with PYGL, GLUL and GLUD1; these interactions result in activation of these metabolic enzymes. Interacts with BIRC2/c-IAP1, BIRC3/c-IAP2 and XIAP/BIRC4. Interacts with ARHGEF2. Interacts with PELI1 (via atypical FHA domain); the phosphorylated form at Thr-182 binds preferentially to PELI1. Interacts with BUB1B, TRAF2 and STUB1. Interacts with CASP6. Component of the AIM2 PANoptosome complex, a multiprotein complex that drives inflammatory cell death (PANoptosis). (Microbial infection) Interacts (via RIP homotypic interaction motif/RHIM) with herpes simplex virus 1/HHV-1 protein RIR1/ICP6 (via RHIM); this interaction may induce heteromeric amyloid assemblies and prevent necroptosis activation. As to quaternary structure, (Microbial infection) Interacts (via RIP homotypic interaction motif/RHIM) with herpes simplex virus 2/HHV-2 protein RIR1/ICP10 (via RHIM); this interaction prevents necroptosis activation. Post-translationally, (Microbial infection) Proteolytically cleaved by S.flexneri OspD3 within the RIP homotypic interaction motif (RHIM), leading to its degradation and inhibition of necroptosis. In terms of processing, RIPK1 and RIPK3 undergo reciprocal auto- and trans-phosphorylation. Autophosphorylated following interaction with ZBP1. Phosphorylation of Ser-199 plays a role in the necroptotic function of RIPK3. Autophosphorylates at Ser-227 following activation by ZBP1: phosphorylation at these sites is a hallmark of necroptosis and is required for binding MLKL. Phosphorylation at Thr-182 is important for its kinase activity, interaction with PELI1 and PELI1-mediated 'Lys-48'-linked polyubiquitination and for its ability to mediate TNF-induced necroptosis. Polyubiquitinated with 'Lys-48' and 'Lys-63'-linked chains by BIRC2/c-IAP1 and BIRC3/c-IAP2, leading to activation of NF-kappa-B. Polyubiquitinated with 'Lys-48'-linked chains by PELI1 leading to its subsequent proteasome-dependent degradation. Ubiquitinated by STUB1 leading to its subsequent proteasome-dependent degradation. Deubiquitinated by USP22. As to expression, highly expressed in the pancreas. Detected at lower levels in heart, placenta, lung and kidney. In terms of tissue distribution, expression is significantly increased in colon and lung cancers.

It is found in the cytoplasm. The protein resides in the cytosol. The protein localises to the nucleus. The catalysed reaction is L-seryl-[protein] + ATP = O-phospho-L-seryl-[protein] + ADP + H(+). The enzyme catalyses L-threonyl-[protein] + ATP = O-phospho-L-threonyl-[protein] + ADP + H(+). With respect to regulation, activity is stimulated by ZBP1, which senses double-stranded Z-RNA structures. RIPK3-dependent necroptosis is inhibited by RIPK1: RIPK1 prevents the ZBP1-induced activation of RIPK3 via FADD-mediated recruitment of CASP8, which cleaves RIPK1 and limits TNF-induced necroptosis. Its function is as follows. Serine/threonine-protein kinase that activates necroptosis and apoptosis, two parallel forms of cell death. Necroptosis, a programmed cell death process in response to death-inducing TNF-alpha family members, is triggered by RIPK3 following activation by ZBP1. Activated RIPK3 forms a necrosis-inducing complex and mediates phosphorylation of MLKL, promoting MLKL localization to the plasma membrane and execution of programmed necrosis characterized by calcium influx and plasma membrane damage. In addition to TNF-induced necroptosis, necroptosis can also take place in the nucleus in response to orthomyxoviruses infection: following ZBP1 activation, which senses double-stranded Z-RNA structures, nuclear RIPK3 catalyzes phosphorylation and activation of MLKL, promoting disruption of the nuclear envelope and leakage of cellular DNA into the cytosol. Also regulates apoptosis: apoptosis depends on RIPK1, FADD and CASP8, and is independent of MLKL and RIPK3 kinase activity. Phosphorylates RIPK1: RIPK1 and RIPK3 undergo reciprocal auto- and trans-phosphorylation. In some cell types, also able to restrict viral replication by promoting cell death-independent responses. In response to Zika virus infection in neurons, promotes a cell death-independent pathway that restricts viral replication: together with ZBP1, promotes a death-independent transcriptional program that modifies the cellular metabolism via up-regulation expression of the enzyme ACOD1/IRG1 and production of the metabolite itaconate. Itaconate inhibits the activity of succinate dehydrogenase, generating a metabolic state in neurons that suppresses replication of viral genomes. RIPK3 binds to and enhances the activity of three metabolic enzymes: GLUL, GLUD1, and PYGL. These metabolic enzymes may eventually stimulate the tricarboxylic acid cycle and oxidative phosphorylation, which could result in enhanced ROS production. In terms of biological role, (Microbial infection) In case of herpes simplex virus 1/HHV-1 infection, forms heteromeric amyloid structures with HHV-1 protein RIR1/ICP6 which may inhibit RIPK3-mediated necroptosis, thereby preventing host cell death pathway and allowing viral evasion. The protein is Receptor-interacting serine/threonine-protein kinase 3 of Homo sapiens (Human).